A 308-amino-acid polypeptide reads, in one-letter code: MSAQKPGLHPRNRHHSRYDLATLCQVNPELRQFLTLTPAGEQSVDFANPLAVKALNKALLAHFYAVANWDIPDGFLCPPVPGRADHIHHLADLLAEASGTIPANASILDIGVGANCIYPLIGVHEYGWRFTGSETSSQALSSAQAIISANPGLNRAIRLRRQKESGAIFNGIIHKNEQYDATLCNPPFHDSAAAARAGSERKRRNLGLNKDDALNFGGQQQELWCEGGEVTFIKKMIEESKGFAKQMMWFTSLVSRGENLPPLYRALTDVGAVKVVKKEMAQGQKQSRFIAWTFMNDEQRRRFVNRQR.

This sequence belongs to the methyltransferase superfamily. METTL16/RlmF family.

Its subcellular location is the cytoplasm. It catalyses the reaction adenosine(1618) in 23S rRNA + S-adenosyl-L-methionine = N(6)-methyladenosine(1618) in 23S rRNA + S-adenosyl-L-homocysteine + H(+). In terms of biological role, specifically methylates the adenine in position 1618 of 23S rRNA. This is Ribosomal RNA large subunit methyltransferase F from Shigella dysenteriae serotype 1 (strain Sd197).